Consider the following 311-residue polypeptide: MANPLYQKHIISINDLSRDDLNLVLATAAKLKANPQPELLKHKVIASCFFEASTRTRLSFETSMHRLGASVVGFSDSANTSLGKKGETLADTISVISTYVDAIVMRHPQEGAARLATEFSGNVPVLNAGDGSNQHPTQTLLDLFTIQETQGRLDNLHVAMVGDLKYGRTVHSLTQALAKFDGNRFYFIAPDALAMPQYILDMLDEKGIAWSLHSSIEEVMAEVDILYMTRVQKERLDPSEYANVKAQFVLRASDLHNAKANMKVLHPLPRVDEIATDVDKTPHAWYFQQAGNGIFARQALLALVLNRDLVL.

Arg55 and Thr56 together coordinate carbamoyl phosphate. Position 85 (Lys85) interacts with L-aspartate. The carbamoyl phosphate site is built by Arg106, His135, and Gln138. Positions 168 and 230 each coordinate L-aspartate. Carbamoyl phosphate contacts are provided by Leu268 and Pro269.

It belongs to the aspartate/ornithine carbamoyltransferase superfamily. ATCase family. In terms of assembly, heterododecamer (2C3:3R2) of six catalytic PyrB chains organized as two trimers (C3), and six regulatory PyrI chains organized as three dimers (R2).

It catalyses the reaction carbamoyl phosphate + L-aspartate = N-carbamoyl-L-aspartate + phosphate + H(+). It functions in the pathway pyrimidine metabolism; UMP biosynthesis via de novo pathway; (S)-dihydroorotate from bicarbonate: step 2/3. Its function is as follows. Catalyzes the condensation of carbamoyl phosphate and aspartate to form carbamoyl aspartate and inorganic phosphate, the committed step in the de novo pyrimidine nucleotide biosynthesis pathway. In Escherichia coli O139:H28 (strain E24377A / ETEC), this protein is Aspartate carbamoyltransferase catalytic subunit.